A 165-amino-acid chain; its full sequence is Protein SprT (165 aa).

A SprT-like domain is found at 22–163; sequence LAQANLKLDR…RCVHCGEPLV (142 aa). His78 provides a ligand contact to Zn(2+). Glu79 is a catalytic residue. His82 serves as a coordination point for Zn(2+).

The protein belongs to the SprT family. Requires Zn(2+) as cofactor.

The protein localises to the cytoplasm. In Salmonella agona (strain SL483), this protein is Protein SprT.